The sequence spans 499 residues: Endoglucanase 3 (499 aa).

The N-terminal stretch at 1-19 is a signal peptide; sequence MALLRCLFLLAVLLPHRNA. The active-site Nucleophile is Asp-88. Residues His-416, Asp-467, and Glu-476 contribute to the active site.

Belongs to the glycosyl hydrolase 9 (cellulase E) family. In terms of tissue distribution, expressed in flowers.

It localises to the secreted. The enzyme catalyses Endohydrolysis of (1-&gt;4)-beta-D-glucosidic linkages in cellulose, lichenin and cereal beta-D-glucans.. This chain is Endoglucanase 3 (GLU8), found in Oryza sativa subsp. japonica (Rice).